A 557-amino-acid chain; its full sequence is Eudesmanediol synthase (557 aa).

Residues D310 and D314 each coordinate Mg(2+). Substrate-binding residues include D310, D314, and R450. A DDXXD motif motif is present at residues 310-314; that stretch reads DDTFD. Positions 453 and 457 each coordinate Mg(2+).

It belongs to the terpene synthase family. As to quaternary structure, monomer. Requires Mg(2+) as cofactor. The cofactor is Mn(2+).

It localises to the cytoplasm. The catalysed reaction is (2E,6E)-farnesyl diphosphate + 2 H2O = 7-epi-ent-eudesmane-5,11-diol + diphosphate. Its pathway is secondary metabolite biosynthesis; terpenoid biosynthesis. Functionally, component of the volatile terpenes biosynthesis pathways. Dihydroxylated sesquiterpenoid synthase that generates dually hydroxylated products directly from (E,E)-farnesyl diphosphate, primarily eudesmane-2,11-diol, along with two closely related structural isomers. The sequence is that of Eudesmanediol synthase from Zea mays (Maize).